The chain runs to 400 residues: Nicotinate phosphoribosyltransferase (400 aa).

H220 is modified (phosphohistidine; by autocatalysis).

The protein belongs to the NAPRTase family. Post-translationally, transiently phosphorylated on a His residue during the reaction cycle. Phosphorylation strongly increases the affinity for substrates and increases the rate of nicotinate D-ribonucleotide production. Dephosphorylation regenerates the low-affinity form of the enzyme, leading to product release.

It carries out the reaction nicotinate + 5-phospho-alpha-D-ribose 1-diphosphate + ATP + H2O = nicotinate beta-D-ribonucleotide + ADP + phosphate + diphosphate. The protein operates within cofactor biosynthesis; NAD(+) biosynthesis; nicotinate D-ribonucleotide from nicotinate: step 1/1. Catalyzes the synthesis of beta-nicotinate D-ribonucleotide from nicotinate and 5-phospho-D-ribose 1-phosphate at the expense of ATP. The protein is Nicotinate phosphoribosyltransferase of Salmonella dublin (strain CT_02021853).